Reading from the N-terminus, the 242-residue chain is Probable transcriptional regulatory protein PG_0097 (242 aa).

This sequence belongs to the TACO1 family.

It is found in the cytoplasm. In Porphyromonas gingivalis (strain ATCC BAA-308 / W83), this protein is Probable transcriptional regulatory protein PG_0097.